The sequence spans 482 residues: ATP-dependent RNA helicase DBP5 (482 aa).

A disordered region spans residues 1-62 (MSDTKRDPAD…KVEEKKTKQE (62 aa)). Basic and acidic residues predominate over residues 17–62 (IDNEKEDTSEVSTKETVKSQPEKTADSIKPAEKLVPKVEEKKTKQE). A phosphoserine mark is found at S86 and S93. The Q motif signature appears at 92-120 (KSFDELGLAPELLKGIYAMKFQKPSKIQE). The Helicase ATP-binding domain occupies 125–292 (LLLHNPPRNM…KKIVPNANTL (168 aa)). An ATP-binding site is contributed by 138–145 (SQSGTGKT). S162 bears the Phosphoserine mark. A DEAD box motif is present at residues 239–242 (DEAD). A Helicase C-terminal domain is found at 303–480 (AIKQLYMDCK…EVEKIVKKVL (178 aa)).

The protein belongs to the DEAD box helicase family. DDX19/DBP5 subfamily. Associates with the nuclear pore complex. Interacts with NUP159, GLE1, GFD1 and ZDS1. The interaction with NUP159 is necessary for the association to the nuclear pore complex. Also interacts with the TFIIH complex subunits TFB1, TFB2 and RAD3.

The protein resides in the cytoplasm. It is found in the nucleus. The protein localises to the nuclear pore complex. It localises to the nucleus membrane. It catalyses the reaction ATP + H2O = ADP + phosphate + H(+). Functionally, ATP-dependent RNA helicase associated with the nuclear pore complex and essential for mRNA export from the nucleus. May participate in a terminal step of mRNA export through the removal of proteins that accompany mRNA through the nucleopore complex. May also be involved in early transcription. This Saccharomyces cerevisiae (strain YJM789) (Baker's yeast) protein is ATP-dependent RNA helicase DBP5 (DBP5).